An 87-amino-acid chain; its full sequence is MKTKLREMLKFPCFFTYKIIGLAQPELVDQIIKVIQIQIPGDYTPQVKSSNRGNYLSVSITICAKNFEQIETLYHDISKINMVRMVL.

It belongs to the UPF0250 family.

The sequence is that of UPF0250 protein BUsg_472 from Buchnera aphidicola subsp. Schizaphis graminum (strain Sg).